Consider the following 148-residue polypeptide: uncharacterized protein (148 aa).

[4Fe-4S] cluster is bound by residues Cys21, Cys24, Cys88, and Cys117.

It belongs to the complex I 20 kDa subunit family. [4Fe-4S] cluster is required as a cofactor.

This is an uncharacterized protein from Methanocaldococcus jannaschii (strain ATCC 43067 / DSM 2661 / JAL-1 / JCM 10045 / NBRC 100440) (Methanococcus jannaschii).